A 417-amino-acid chain; its full sequence is Probable glucuronosyltransferase Os01g0926700 (417 aa).

At Met-1–Arg-3 the chain is on the cytoplasmic side. Residues Trp-4 to Gln-24 form a helical; Signal-anchor for type II membrane protein membrane-spanning segment. Residues Glu-25–Trp-417 lie on the Lumenal side of the membrane. Asn-144 and Asn-405 each carry an N-linked (GlcNAc...) asparagine glycan.

The protein belongs to the glycosyltransferase 47 family.

Its subcellular location is the golgi apparatus membrane. Functionally, involved in the synthesis of glucuronoxylan hemicellulose in secondary cell walls. This is Probable glucuronosyltransferase Os01g0926700 from Oryza sativa subsp. japonica (Rice).